The following is a 469-amino-acid chain: Neuraminidase (469 aa).

Over 1–6 (MNPNQK) the chain is Intravirion. Residues 7–29 (IITIGSVSLTIATACSLMQIAIL) traverse the membrane as a helical segment. The interval 11–33 (GSVSLTIATACSLMQIAILATTV) is involved in apical transport and lipid raft association. Residues 30–469 (ATTVTLHFKQ…DGANINFMPI (440 aa)) are Virion surface-facing. The hypervariable stalk region stretch occupies residues 36-88 (HFKQHECDSPASNQVMPCEPIIIERNITEIVYLNNTTIEKEICPEVVEYRNWS). N-linked (GlcNAc...) asparagine; by host glycosylation is found at N61, N69, N70, and N86. The interval 91-469 (QCQITGFAPF…DGANINFMPI (379 aa)) is head of neuraminidase. 8 disulfide bridges follow: C92–C417, C124–C129, C183–C230, C232–C237, C278–C291, C280–C289, C318–C337, and C421–C447. Substrate is bound at residue R118. N-linked (GlcNAc...) asparagine; by host glycosylation is present at N146. Residue D151 is the Proton donor/acceptor of the active site. Residue R152 coordinates substrate. N-linked (GlcNAc...) asparagine; by host glycans are attached at residues N200 and N234. 276-277 (EE) is a binding site for substrate. Residue R292 participates in substrate binding. The Ca(2+) site is built by D293, G297, and D324. The segment at 325–349 (TPRNDDSSSNSNCRDPNNERGNPGV) is disordered. Residue R371 coordinates substrate. N402 carries N-linked (GlcNAc...) asparagine; by host glycosylation. The active-site Nucleophile is Y406.

It belongs to the glycosyl hydrolase 34 family. Homotetramer. It depends on Ca(2+) as a cofactor. Post-translationally, N-glycosylated.

Its subcellular location is the virion membrane. The protein resides in the host apical cell membrane. The catalysed reaction is Hydrolysis of alpha-(2-&gt;3)-, alpha-(2-&gt;6)-, alpha-(2-&gt;8)- glycosidic linkages of terminal sialic acid residues in oligosaccharides, glycoproteins, glycolipids, colominic acid and synthetic substrates.. Inhibited by the neuraminidase inhibitors zanamivir (Relenza) and oseltamivir (Tamiflu). These drugs interfere with the release of progeny virus from infected cells and are effective against all influenza strains. Resistance to neuraminidase inhibitors is quite rare. Functionally, catalyzes the removal of terminal sialic acid residues from viral and cellular glycoconjugates. Cleaves off the terminal sialic acids on the glycosylated HA during virus budding to facilitate virus release. Additionally helps virus spread through the circulation by further removing sialic acids from the cell surface. These cleavages prevent self-aggregation and ensure the efficient spread of the progeny virus from cell to cell. Otherwise, infection would be limited to one round of replication. Described as a receptor-destroying enzyme because it cleaves a terminal sialic acid from the cellular receptors. May facilitate viral invasion of the upper airways by cleaving the sialic acid moieties on the mucin of the airway epithelial cells. Likely to plays a role in the budding process through its association with lipid rafts during intracellular transport. May additionally display a raft-association independent effect on budding. Plays a role in the determination of host range restriction on replication and virulence. Sialidase activity in late endosome/lysosome traffic seems to enhance virus replication. This Aves (Human) protein is Neuraminidase.